The primary structure comprises 154 residues: MKLRDSLAENKSIRLQAEAETWQDAVKIGVDLLVAADVVEPRYYQAILDAVEQHGPYFVLAPGLAMPHGRPEEGVKKTGFALVTLKKPLEFNHEDNDPVDILITMAAVDANTHQEVGIMQIVNLFEDEENFDRLRACRTEQEVLDLIDRTNAAA.

In terms of domain architecture, PTS EIIA type-2 spans 6–150; it reads SLAENKSIRL…QEVLDLIDRT (145 aa). His-68 functions as the Tele-phosphohistidine intermediate in the catalytic mechanism. His-68 bears the Phosphohistidine mark.

The protein resides in the cytoplasm. Its function is as follows. The phosphoenolpyruvate-dependent sugar phosphotransferase system (sugar PTS), a major carbohydrate active transport system, catalyzes the phosphorylation of incoming sugar substrates concomitantly with their translocation across the cell membrane. The enzyme II UlaABC PTS system is involved in ascorbate transport. The protein is Ascorbate-specific PTS system EIIA component (ulaC) of Shigella boydii serotype 4 (strain Sb227).